The chain runs to 275 residues: Large ribosomal subunit protein uL2 (275 aa).

Disordered regions lie at residues lysine 38 to lysine 59 and glycine 222 to lysine 275. 2 stretches are compositionally biased toward basic residues: residues lysine 39–lysine 59 and methionine 254–lysine 275.

The protein belongs to the universal ribosomal protein uL2 family. As to quaternary structure, part of the 50S ribosomal subunit. Forms a bridge to the 30S subunit in the 70S ribosome.

Its function is as follows. One of the primary rRNA binding proteins. Required for association of the 30S and 50S subunits to form the 70S ribosome, for tRNA binding and peptide bond formation. It has been suggested to have peptidyltransferase activity; this is somewhat controversial. Makes several contacts with the 16S rRNA in the 70S ribosome. The polypeptide is Large ribosomal subunit protein uL2 (Herpetosiphon aurantiacus (strain ATCC 23779 / DSM 785 / 114-95)).